We begin with the raw amino-acid sequence, 1790 residues long: Vitellogenin (1790 aa).

The signal sequence occupies residues Met-1–Ser-19. The 777-residue stretch at Trp-23–Met-799 folds into the Vitellogenin domain. Asn-219 and Asn-297 each carry an N-linked (GlcNAc...) asparagine glycan. The segment covering Leu-342–Glu-353 has biased composition (acidic residues). Residues Leu-342–Pro-400 form a disordered region. Positions Glu-378–Gln-389 are enriched in low complexity. Residues Asn-554, Asn-573, Asn-893, Asn-1345, Asn-1416, Asn-1430, Asn-1480, Asn-1699, and Asn-1735 are each glycosylated (N-linked (GlcNAc...) asparagine). In terms of domain architecture, VWFD spans Pro-1466 to Trp-1675. Cysteines 1468 and 1638 form a disulfide.

The protein resides in the secreted. Its function is as follows. Precursor of the egg-yolk proteins that are sources of nutrients during embryonic development. In Anthonomus grandis (Mexican cotton boll weevil), this protein is Vitellogenin (VTG).